The following is a 1397-amino-acid chain: Clustered mitochondria protein homolog (1397 aa).

One copy of the TPR 1 repeat lies at 30–63; the sequence is LPSFIDQKGDLKIPSHYEETITDLKLTLTVIPKT. Disordered regions lie at residues 158 to 203 and 526 to 555; these read TARG…LSRE and DAAPPSEEEDDAGAEQEKKEEGKAEEDEEE. The span at 161–203 shows a compositional bias: basic and acidic residues; it reads GEAEKSDTNEEEQEQGKGKVGKPNEKESGETKETDSQPELSRE. Residues 368 to 640 enclose the Clu domain; sequence DSSRSQLMLI…RTTPRDIEFI (273 aa). A TPR 2 repeat occupies 559–595; that stretch reads EKVLYGLSSDSQKILEDKSFEKPLKLLSEVFHLKPHG. Composition is skewed to basic and acidic residues over residues 686 to 703, 812 to 831, 839 to 860, and 1019 to 1033; these read EGKLEKDGSKGTNSEEKS, EKVEKDRREAEEAEKAKERA, SDDKNQETIENSDAKSKENTES, and QREQKQESVVDNVEK. 3 disordered regions span residues 686 to 707, 812 to 869, and 1019 to 1050; these read EGKLEKDGSKGTNSEEKSQIAL, EKVE…EEQP, and QREQKQESVVDNVEKKHSKKSKKKSPALPIEN. The span at 1034–1043 shows a compositional bias: basic residues; it reads KHSKKSKKKS. TPR repeat units lie at residues 1167 to 1200 and 1209 to 1242; these read IAAYMNSAYFELANSQIANSLKLYLRAMQLWTST and VNLLTNVADSLYYAKDYESALKLFNAALEACSHL. Composition is skewed to polar residues over residues 1314–1338 and 1362–1373; these read AQSKKSPPPTQTVAPNARVSASQAS and PQSDPQIANQSV. A disordered region spans residues 1314 to 1397; the sequence is AQSKKSPPPT…AKSKSKHTKA (84 aa). Over residues 1375–1384 the composition is skewed to basic and acidic residues; the sequence is DILKFIEGKS. The segment covering 1386–1397 has biased composition (basic residues); the sequence is PNAKSKSKHTKA.

The protein belongs to the CLU family. May associate with the eukaryotic translation initiation factor 3 (eIF-3) complex.

Its subcellular location is the cytoplasm. Functionally, mRNA-binding protein involved in proper cytoplasmic distribution of mitochondria. The chain is Clustered mitochondria protein homolog from Lodderomyces elongisporus (strain ATCC 11503 / CBS 2605 / JCM 1781 / NBRC 1676 / NRRL YB-4239) (Yeast).